The primary structure comprises 420 residues: MGHETEISKRYQVAKERYQAIGVDTENALKTLKDIKISMHCWQGDDVKGFLNPDGELTGGIMATGNYPGAAHTPKQLRQDLEKAYSLIPGKHKLNLHAIYVDTDEKVDLNEIEPKHFTPWVEWAKEQGLGLDFNPTFFSHPMFKDNYTLASPDKEVRDFWIEHGKRSRKISEYFGKELGQTSINNFWVPDGIKDCPIDRYTPRKRLMEALDEVFAEKLDEKYTQEAVESKLFGLGAEAYTVGSHEFYMGYGITRDKLICLDAGHFHPTEVISNKLSSLALFSKGVMLHVSRPVRWDSDHVVIMDDELIEIGRELVRNDLLGITNIGLDFFDATINRIAAWVVGTRNTQKSLLKALLEPTADLKKMELENDFTSRMAITEELKDFPFGDVWNYFCEINGVPVGLDWLKEVKAYEEDVLLKR.

His264, Asp296, and Asp298 together coordinate Mn(2+).

The protein belongs to the rhamnose isomerase family. Requires Mn(2+) as cofactor.

Its subcellular location is the cytoplasm. The catalysed reaction is L-rhamnopyranose = L-rhamnulose. It participates in carbohydrate degradation; L-rhamnose degradation; glycerone phosphate from L-rhamnose: step 1/3. Catalyzes the interconversion of L-rhamnose and L-rhamnulose. This Listeria monocytogenes serotype 4b (strain F2365) protein is L-rhamnose isomerase.